The following is a 317-amino-acid chain: Small ribosomal subunit protein uS2 (317 aa).

Disordered stretches follow at residues 1 to 30 and 293 to 317; these read MENE…ASKE and RSFE…EVAE. Residues 18 to 30 are compositionally biased toward basic and acidic residues; that stretch reads MAEKADDSKASKE. Over residues 308–317 the composition is skewed to low complexity; it reads KTTTSTEVAE.

This sequence belongs to the universal ribosomal protein uS2 family.

The protein is Small ribosomal subunit protein uS2 of Mycoplasmopsis agalactiae (strain NCTC 10123 / CIP 59.7 / PG2) (Mycoplasma agalactiae).